The primary structure comprises 389 residues: Chalcone synthase 1 (389 aa).

Cys-164 is an active-site residue.

The protein belongs to the thiolase-like superfamily. Chalcone/stilbene synthases family.

It carries out the reaction (E)-4-coumaroyl-CoA + 3 malonyl-CoA + 3 H(+) = 2',4,4',6'-tetrahydroxychalcone + 3 CO2 + 4 CoA. It participates in secondary metabolite biosynthesis; flavonoid biosynthesis. Its function is as follows. The primary product of this enzyme is 4,2',4',6'-tetrahydroxychalcone (also termed naringenin-chalcone or chalcone) which can under specific conditions spontaneously isomerize into naringenin. The protein is Chalcone synthase 1 (CHS1) of Solanum lycopersicum (Tomato).